A 100-amino-acid chain; its full sequence is Urease subunit gamma (100 aa).

This sequence belongs to the urease gamma subunit family. As to quaternary structure, heterotrimer of UreA (gamma), UreB (beta) and UreC (alpha) subunits. Three heterotrimers associate to form the active enzyme.

It localises to the cytoplasm. It carries out the reaction urea + 2 H2O + H(+) = hydrogencarbonate + 2 NH4(+). The protein operates within nitrogen metabolism; urea degradation; CO(2) and NH(3) from urea (urease route): step 1/1. The protein is Urease subunit gamma of Delftia acidovorans (strain DSM 14801 / SPH-1).